A 365-amino-acid chain; its full sequence is Caffeic acid 3-O-methyltransferase (365 aa).

Residue 130–136 (MNQDKVL) participates in substrate binding. The tract at residues 162–180 (AFDYHGTDPRFNKVFNKGM) is substrate binding. 5 residues coordinate S-adenosyl-L-methionine: Gly-208, Asp-231, Asp-251, Met-252, and Lys-265. His-269 acts as the Proton acceptor in catalysis.

Belongs to the class I-like SAM-binding methyltransferase superfamily. Cation-independent O-methyltransferase family. COMT subfamily. As to quaternary structure, homodimer.

It carries out the reaction (E)-caffeate + S-adenosyl-L-methionine = (E)-ferulate + S-adenosyl-L-homocysteine + H(+). The protein operates within aromatic compound metabolism; phenylpropanoid biosynthesis. Functionally, catalyzes the conversion of caffeic acid to ferulic acid and of 5-hydroxyferulic acid to sinapic acid. The resulting products may subsequently be converted to the corresponding alcohols that are incorporated into lignins. The polypeptide is Caffeic acid 3-O-methyltransferase (COMT1) (Rosa chinensis (China rose)).